A 902-amino-acid polypeptide reads, in one-letter code: Chloride channel protein 2 (902 aa).

Residues 1–89 (MAASAAAAGE…RCHKFLVSRV (89 aa)) are Cytoplasmic-facing. Residues 18–36 (QYEQTLMYGRYTQELGAFA) form an essential for channel gating by both voltage and cell volume region. Thr22 bears the Phosphothreonine mark. The modulates channel gating by both voltage and cell volume stretch occupies residues 38 to 51 (EEAARIRLGGPEPW). 2 helical membrane passes run 90-123 (GEDW…AQQW) and 132-157 (ILLQ…TQIL). Residues 163–167 (GSGIP) carry the Selectivity filter part_1 motif. The helical intramembrane region spans 166–173 (IPEMKTIL). A run of 2 helical transmembrane segments spans residues 182–200 (LTLK…ALGS) and 207–225 (EGPF…SKFL). Positions 205 to 209 (GKEGP) match the Selectivity filter part_2 motif. 2 consecutive intramembrane regions (helical) follow at residues 241 to 253 (MLAA…VGCC) and 257 to 265 (PIGGVLFSI). A run of 5 helical transmembrane segments spans residues 277 to 297 (YWRG…LAVW), 323 to 351 (LPAF…VQVM), 360 to 379 (FLMR…ISTL), 431 to 451 (ANVF…SALA), and 459 to 482 (GAFM…MAAW). The Selectivity filter part_3 signature appears at 459–463 (GAFMP). An intramembrane region (helical) is located at residues 499 to 513 (GGYAVVGAAALAGAV). The segment at residues 514–515 (TH) is an intramembrane region (note=Loop between two helices). An intramembrane region (helical) is located at residues 516-527 (TVSTAVIVFELT). An intramembrane region (note=Loop between two helices) is located at residues 528-532 (GQIAH). A helical membrane pass occupies residues 533–550 (ILPVMIAVILANAVAQSL). Residues 551–902 (QPSLYDSIIR…SPSDSDDKCQ (352 aa)) are Cytoplasmic-facing. Residues 586–644 (MVRDVPYVALNCTFRDLRLALHRTKGRMLALVESSESMILLGSIERSQVVTLLGAQLSA) form the CBS 1 domain. Residues 648–748 (RQHIQERRKA…TSDLEKPESC (101 aa)) are disordered. 2 stretches are compositionally biased toward polar residues: residues 671-683 (PESS…NTED) and 706-719 (SNAS…TGSM). A CBS 2 domain is found at 794–854 (IDPAPFQLVE…GSVTAQGVKV (61 aa)). The Basolateral membrane sorting motif lies at 816-817 (LL). A disordered region spans residues 860-902 (SFRDSATSSSDTETTEVHALWGPHSCHGLPRDGSPSDSDDKCQ).

Belongs to the chloride channel (TC 2.A.49) family. ClC-2/CLCN2 subfamily. Homodimer. Interacts with auxiliary subunit HEPACAM.

The protein localises to the cell membrane. The protein resides in the basolateral cell membrane. It localises to the cell projection. Its subcellular location is the dendritic spine membrane. It is found in the axon. The enzyme catalyses chloride(in) = chloride(out). It catalyses the reaction thiocyanate(in) = thiocyanate(out). It carries out the reaction bromide(in) = bromide(out). The catalysed reaction is nitrate(in) = nitrate(out). The enzyme catalyses iodide(out) = iodide(in). With respect to regulation, common gate kinetics are down-regulated by intracellular ATP. Inhibited by AK-42, a derivative of meclofenamate. Inhibited by Cd(2+). Inhibited by Zn(2+) and PKC activation. Inhibited at acidic pH. CCLN2:HEPACAM channel conductance is up-regulated upon hypo-osmolarity. Functionally, voltage-gated and osmosensitive chloride channel. Forms a homodimeric channel where each subunit has its own ion conduction pathway. Conducts double-barreled currents controlled by two types of gates, two fast glutamate gates that control each subunit independently and a slow common gate that opens and shuts off both subunits simultaneously. Displays inward rectification currents activated upon membrane hyperpolarization and extracellular hypotonicity. Contributes to chloride conductance involved in neuron excitability. In hippocampal neurons, generates a significant part of resting membrane conductance and provides an additional chloride efflux pathway to prevent chloride accumulation in dendrites upon GABA receptor activation. In glia, associates with the auxiliary subunit HEPACAM/GlialCAM at astrocytic processes and myelinated fiber tracts where it may regulate transcellular chloride flux buffering extracellular chloride and potassium concentrations. Regulates aldosterone production in adrenal glands. The opening of CLCN2 channels at hyperpolarized membrane potentials in the glomerulosa causes cell membrane depolarization, activation of voltage-gated calcium channels and increased expression of aldosterone synthase, the rate-limiting enzyme for aldosterone biosynthesis. Contributes to chloride conductance in retinal pigment epithelium involved in phagocytosis of shed photoreceptor outer segments and photoreceptor renewal. Conducts chloride currents at the basolateral membrane of epithelial cells with a role in chloride reabsorption rather than secretion. Permeable to small monovalent anions with chloride &gt; thiocyanate &gt; bromide &gt; nitrate &gt; iodide ion selectivity. The polypeptide is Chloride channel protein 2 (CLCN2) (Cavia porcellus (Guinea pig)).